The following is a 158-amino-acid chain: Large ribosomal subunit protein bL21 (158 aa).

Residues 106–158 (SKPKKAAAKPIKEEATAAKGTKDTAVEKKAEKTAEKKTASQKKAAVASKSKKD) are disordered. Over residues 115-143 (PIKEEATAAKGTKDTAVEKKAEKTAEKKT) the composition is skewed to basic and acidic residues. Over residues 146–158 (QKKAAVASKSKKD) the composition is skewed to low complexity.

Belongs to the bacterial ribosomal protein bL21 family. In terms of assembly, part of the 50S ribosomal subunit. Contacts protein L20.

Its function is as follows. This protein binds to 23S rRNA in the presence of protein L20. This Bartonella tribocorum (strain CIP 105476 / IBS 506) protein is Large ribosomal subunit protein bL21.